Here is a 270-residue protein sequence, read N- to C-terminus: Glutamate racemase (270 aa).

Residues 10-11 (DS) and 42-43 (YG) contribute to the substrate site. Cysteine 73 (proton donor/acceptor) is an active-site residue. 74–75 (NT) serves as a coordination point for substrate. The Proton donor/acceptor role is filled by cysteine 184. Residue 185–186 (TH) participates in substrate binding.

The protein belongs to the aspartate/glutamate racemases family.

It catalyses the reaction L-glutamate = D-glutamate. The protein operates within cell wall biogenesis; peptidoglycan biosynthesis. Its function is as follows. Provides the (R)-glutamate required for cell wall biosynthesis. The protein is Glutamate racemase of Geobacter metallireducens (strain ATCC 53774 / DSM 7210 / GS-15).